Reading from the N-terminus, the 835-residue chain is MKVLALRHSVAQVYADTQIYTHDETKDDYENAFLISNLTTHNILYLNYSVKTLQILNKSGIAAVEIQKMDELFTLIRCNFTYDYIEDIVYLHDYSYYTNNEIRTDQHWVTKTNIEDYLLPGWKLTYVGYNGSDTRGHYNFSFKCQNAATDDDAIIEYIYSNELDFQNFILKKIKERMTTSLPIARLSNRVFRDKLFKTLVSDHSKVVNVGPRNESMFTFLDHPSIKQFSNGPYLVKDTIKLKQERWLGKRLSQFDIGQYKNMLNVLTTLYQYYDMYHEKPIIYMIGSAPSYWIYDVKQYSNLKFETWDPLDTPYSDLHHKELFYISDVTKLKDNSILYVDIRTDRENMDWKTWRKIVEEQTINNLNIAYRYLSTGKAKVCCVKMTAMDLELPISAKLLHHPTTEIRSEFYLIMDIWDSKNIKRFIPKGVLYSYINNVITENVFIQQPFKLKTLRNEYVVALYALSNDFNNREDVIKLVNNQKNALITVRINNTFKDEPKVGFKDIYDWTFLPTDFETNESIITSYDGCLGMFGLSISLASKPTGNNHLFILSGTNKYFKLDQFANHMSISRRSHQIRFSESATSYSGYIFRDLSNNNFNLIGTNVENSVSGHVYNALIYYRYNYSFDLKRWIYLHSTNKASIEGGRYYEHAPIELIYACRSAREFARLQDDLTVLRYSNEIENYINKVYSITYADDPNYFIGIKFKNIPYEYDVKVPHLTFGVLNISNSMVPDVVAILKKFKSELFRMDVTTSYTYMLSDEIYVANVSGVLSTYFKLYNAFYKEQITFGQSRMFIPHITLSFSDKKVVRIDSTRLNIDFIYLRKIKGDTVFDMAE.

An N7-methyltransferase activity region spans residues 171-245; the sequence is KKIKERMTTS…KDTIKLKQER (75 aa). Residues 246–428 form a 2'-O-methyltransferase activity region; sequence WLGKRLSQFD…KNIKRFIPKG (183 aa). The interval 429–555 is N7-methyltransferase activity; it reads VLYSYINNVI…NHLFILSGTN (127 aa). The GTase/RTPase activity stretch occupies residues 556–692; the sequence is KYFKLDQFAN…NYINKVYSIT (137 aa). The interval 693–835 is 2'-5'-phosphodiesterase activity; that stretch reads YADDPNYFIG…KGDTVFDMAE (143 aa). Residues H718, T720, H797, and T799 each act as for 2'-5'-phosphodiesterase activity in the active site.

This sequence belongs to the rotavirus VP3 family. As to quaternary structure, interacts with VP1. Interacts with VP2.

Its subcellular location is the virion. It catalyses the reaction a 5'-end diphospho-ribonucleoside in mRNA + GTP + H(+) = a 5'-end (5'-triphosphoguanosine)-ribonucleoside in mRNA + diphosphate. The catalysed reaction is a 5'-end (5'-triphosphoguanosine)-ribonucleoside in mRNA + S-adenosyl-L-methionine = a 5'-end (N(7)-methyl 5'-triphosphoguanosine)-ribonucleoside in mRNA + S-adenosyl-L-homocysteine. The enzyme catalyses 5'-triphosphoadenylyl-(2'-&gt;5')-adenylyl-(2'-&gt;5')-adenosine + 2 H2O = 2 AMP + ATP + 2 H(+). In terms of biological role, multifunctional enzyme involved in mRNA capping. Catalyzes the formation of the 5' cap structure on the viral plus-strand transcripts. Specifically binds to GTP and displays guanylyltransferase and methyltransferase activities. Has affinity for ssRNA but not for dsRNA. Capping activity is non-specific and caps RNAs that initiate with either a G or an A residue. Together with VP1 polymerase, forms a VP1-VP3 complex positioned near the channels situated at each of the five-fold vertices of the core. Following infection, the outermost layer of the virus is lost, leaving a double-layered particle (DLP) made up of the core and VP6 shell. VP1 then catalyzes the transcription of fully conservative plus-strand genomic RNAs that are capped by VP3 and extruded through the DLP's channels into the cytoplasm where they function as mRNAs for translation of viral proteins. DLPs probably have an RNA triphosphatase activity as well, whereas open cores do not. Counteracts the host innate immune response thanks to its phosphodiesterase that degrades the 5'-triphosphorylated, 2'-5' linked adenylate oligomers produced by the host cell IFN-inducible 2',5'-oligoadenylate synthetase (OAS). The host RNaseL is therefore not activated. In Homo sapiens (Human), this protein is Protein VP3.